The sequence spans 330 residues: Peroxidase 55 (330 aa).

A signal peptide spans 1–30 (MDIRSDDAKKPMMMWFLGMLLFSMVAESNA). Disulfide bonds link Cys41–Cys121, Cys74–Cys79, Cys127–Cys326, and Cys206–Cys238. His72 (proton acceptor) is an active-site residue. Ca(2+)-binding residues include Asp73, Val76, Gly78, Asp80, and Ser82. Residue Pro169 participates in substrate binding. His199 contacts heme b. Thr200 provides a ligand contact to Ca(2+). Asn215 is a glycosylation site (N-linked (GlcNAc...) asparagine). Ca(2+) is bound by residues Asp250, Ser253, and Asp258.

The protein belongs to the peroxidase family. Classical plant (class III) peroxidase subfamily. Heme b serves as cofactor. Ca(2+) is required as a cofactor. As to expression, slightly expressed in roots.

The protein resides in the secreted. The enzyme catalyses 2 a phenolic donor + H2O2 = 2 a phenolic radical donor + 2 H2O. Its function is as follows. Removal of H(2)O(2), oxidation of toxic reductants, biosynthesis and degradation of lignin, suberization, auxin catabolism, response to environmental stresses such as wounding, pathogen attack and oxidative stress. These functions might be dependent on each isozyme/isoform in each plant tissue. The protein is Peroxidase 55 (PER55) of Arabidopsis thaliana (Mouse-ear cress).